A 696-amino-acid chain; its full sequence is Polyribonucleotide nucleotidyltransferase (696 aa).

Residues Asp486 and Asp492 each contribute to the Mg(2+) site. The KH domain occupies 553 to 612 (PRIIVRNIPKDRIGELIGPGGKNVRGISELTGAELYIEDDGRVTISGSNQESAEKAAKMV). An S1 motif domain is found at 622-690 (GKIYEGKVKR…KTGKIDLSRK (69 aa)).

The protein belongs to the polyribonucleotide nucleotidyltransferase family. The cofactor is Mg(2+).

The protein resides in the cytoplasm. The catalysed reaction is RNA(n+1) + phosphate = RNA(n) + a ribonucleoside 5'-diphosphate. Involved in mRNA degradation. Catalyzes the phosphorolysis of single-stranded polyribonucleotides processively in the 3'- to 5'-direction. This Leptospira borgpetersenii serovar Hardjo-bovis (strain L550) protein is Polyribonucleotide nucleotidyltransferase.